A 121-amino-acid chain; its full sequence is Cell division protein FtsL (121 aa).

Residues 1 to 34 (MISRVTEALSKVKGSMGSHERHALPGVIGDDLLR) lie on the Cytoplasmic side of the membrane. A helical transmembrane segment spans residues 35 to 57 (FGKLPLCLFICIILTAVTVVTTA). Topologically, residues 58-121 (HHTRLLTAQR…PSQENIVVQK (64 aa)) are periplasmic.

It belongs to the FtsL family. In terms of assembly, part of a complex composed of FtsB, FtsL and FtsQ.

It localises to the cell inner membrane. Essential cell division protein. May link together the upstream cell division proteins, which are predominantly cytoplasmic, with the downstream cell division proteins, which are predominantly periplasmic. This is Cell division protein FtsL from Shigella dysenteriae serotype 1 (strain Sd197).